Consider the following 331-residue polypeptide: Ketol-acid reductoisomerase (NADP(+)) (331 aa).

Residues 2–182 form the KARI N-terminal Rossmann domain; the sequence is ARMYYDEDGN…GGTRAGILET (181 aa). NADP(+)-binding positions include 25–28, Ser-51, Ser-53, and 83–86; these read YGSQ and DEVQ. Residue His-108 is part of the active site. Gly-134 is an NADP(+) binding site. Residues 183-328 form the KARI C-terminal knotted domain; the sequence is SFREETETDL…KDLRAMFSWL (146 aa). Residues Asp-191, Glu-195, Glu-227, and Glu-231 each coordinate Mg(2+). Substrate is bound at residue Ser-252.

Belongs to the ketol-acid reductoisomerase family. It depends on Mg(2+) as a cofactor.

It catalyses the reaction (2R)-2,3-dihydroxy-3-methylbutanoate + NADP(+) = (2S)-2-acetolactate + NADPH + H(+). The catalysed reaction is (2R,3R)-2,3-dihydroxy-3-methylpentanoate + NADP(+) = (S)-2-ethyl-2-hydroxy-3-oxobutanoate + NADPH + H(+). It functions in the pathway amino-acid biosynthesis; L-isoleucine biosynthesis; L-isoleucine from 2-oxobutanoate: step 2/4. The protein operates within amino-acid biosynthesis; L-valine biosynthesis; L-valine from pyruvate: step 2/4. Functionally, involved in the biosynthesis of branched-chain amino acids (BCAA). Catalyzes an alkyl-migration followed by a ketol-acid reduction of (S)-2-acetolactate (S2AL) to yield (R)-2,3-dihydroxy-isovalerate. In the isomerase reaction, S2AL is rearranged via a Mg-dependent methyl migration to produce 3-hydroxy-3-methyl-2-ketobutyrate (HMKB). In the reductase reaction, this 2-ketoacid undergoes a metal-dependent reduction by NADPH to yield (R)-2,3-dihydroxy-isovalerate. This is Ketol-acid reductoisomerase (NADP(+)) from Gloeothece citriformis (strain PCC 7424) (Cyanothece sp. (strain PCC 7424)).